The following is a 64-amino-acid chain: Toxin Tce3 (64 aa).

The region spanning 1-62 (KDGYIIEHRG…IFDSNNNKCS (62 aa)) is the LCN-type CS-alpha/beta domain. 4 disulfide bridges follow: Cys11/Cys61, Cys15/Cys37, Cys23/Cys42, and Cys27/Cys44.

This sequence belongs to the long (4 C-C) scorpion toxin superfamily. Sodium channel inhibitor family. Beta subfamily. As to expression, expressed by the venom gland.

The protein resides in the secreted. Its function is as follows. Inhibits the sodium (Nav) currents in an apparent irreversible manner. Produces small depolarization and induces repetitive firing in squid axons. Is specific for arthropods (crickets, triatomides, crabs and squids), but is non-toxic to mice. Shows antibacterial activity against both Gram-positive and Gram-negative bacteria. The polypeptide is Toxin Tce3 (Tityus cerroazul (Scorpion)).